Consider the following 132-residue polypeptide: Small ribosomal subunit protein uS11 (132 aa).

Belongs to the universal ribosomal protein uS11 family. Part of the 30S ribosomal subunit. Interacts with proteins S7 and S18. Binds to IF-3.

Its function is as follows. Located on the platform of the 30S subunit, it bridges several disparate RNA helices of the 16S rRNA. Forms part of the Shine-Dalgarno cleft in the 70S ribosome. The polypeptide is Small ribosomal subunit protein uS11 (Chlamydia trachomatis serovar A (strain ATCC VR-571B / DSM 19440 / HAR-13)).